The primary structure comprises 285 residues: Bifunctional protein FolD (285 aa).

NADP(+) is bound by residues Gly-164 to Ser-166, Ser-193, and Ile-234.

This sequence belongs to the tetrahydrofolate dehydrogenase/cyclohydrolase family. Homodimer.

It catalyses the reaction (6R)-5,10-methylene-5,6,7,8-tetrahydrofolate + NADP(+) = (6R)-5,10-methenyltetrahydrofolate + NADPH. The catalysed reaction is (6R)-5,10-methenyltetrahydrofolate + H2O = (6R)-10-formyltetrahydrofolate + H(+). It participates in one-carbon metabolism; tetrahydrofolate interconversion. In terms of biological role, catalyzes the oxidation of 5,10-methylenetetrahydrofolate to 5,10-methenyltetrahydrofolate and then the hydrolysis of 5,10-methenyltetrahydrofolate to 10-formyltetrahydrofolate. The polypeptide is Bifunctional protein FolD (Desulfovibrio desulfuricans (strain ATCC 27774 / DSM 6949 / MB)).